Consider the following 102-residue polypeptide: Small ribosomal subunit protein uS10 (102 aa).

It belongs to the universal ribosomal protein uS10 family. In terms of assembly, part of the 30S ribosomal subunit.

Its function is as follows. Involved in the binding of tRNA to the ribosomes. This chain is Small ribosomal subunit protein uS10, found in Staphylococcus aureus (strain JH9).